The following is a 60-amino-acid chain: Cecropin-B (60 aa).

The signal sequence occupies residues 1–25 (MNFTKLFILVAIAVLVVVGVQPVDG). The residue at position 59 (Leu59) is a Leucine amide.

Belongs to the cecropin family.

It localises to the secreted. Cecropins have lytic and antibacterial activity against several Gram-positive and Gram-negative bacteria. This Anopheles gambiae (African malaria mosquito) protein is Cecropin-B (CecB).